Here is a 127-residue protein sequence, read N- to C-terminus: Large ribosomal subunit protein bL19 (127 aa).

The protein belongs to the bacterial ribosomal protein bL19 family.

This protein is located at the 30S-50S ribosomal subunit interface and may play a role in the structure and function of the aminoacyl-tRNA binding site. In Acidovorax ebreus (strain TPSY) (Diaphorobacter sp. (strain TPSY)), this protein is Large ribosomal subunit protein bL19.